Here is a 66-residue protein sequence, read N- to C-terminus: Large ribosomal subunit protein uL29 (66 aa).

This sequence belongs to the universal ribosomal protein uL29 family.

The sequence is that of Large ribosomal subunit protein uL29 from Thermococcus gammatolerans (strain DSM 15229 / JCM 11827 / EJ3).